A 407-amino-acid chain; its full sequence is Multifunctional CCA protein (407 aa).

Residues glycine 8 and arginine 11 each contribute to the ATP site. Positions 8 and 11 each coordinate CTP. The Mg(2+) site is built by aspartate 21 and aspartate 23. 3 residues coordinate ATP: arginine 91, arginine 137, and arginine 140. CTP contacts are provided by arginine 91, arginine 137, and arginine 140. Residues 225 to 326 form the HD domain; that stretch reads CGDHVMRVLD…LRLLKDCDAL (102 aa).

The protein belongs to the tRNA nucleotidyltransferase/poly(A) polymerase family. Bacterial CCA-adding enzyme type 1 subfamily. Monomer. Can also form homodimers and oligomers. The cofactor is Mg(2+). Ni(2+) is required as a cofactor.

It carries out the reaction a tRNA precursor + 2 CTP + ATP = a tRNA with a 3' CCA end + 3 diphosphate. The enzyme catalyses a tRNA with a 3' CCA end + 2 CTP + ATP = a tRNA with a 3' CCACCA end + 3 diphosphate. Catalyzes the addition and repair of the essential 3'-terminal CCA sequence in tRNAs without using a nucleic acid template. Adds these three nucleotides in the order of C, C, and A to the tRNA nucleotide-73, using CTP and ATP as substrates and producing inorganic pyrophosphate. tRNA 3'-terminal CCA addition is required both for tRNA processing and repair. Also involved in tRNA surveillance by mediating tandem CCA addition to generate a CCACCA at the 3' terminus of unstable tRNAs. While stable tRNAs receive only 3'-terminal CCA, unstable tRNAs are marked with CCACCA and rapidly degraded. In Chromobacterium violaceum (strain ATCC 12472 / DSM 30191 / JCM 1249 / CCUG 213 / NBRC 12614 / NCIMB 9131 / NCTC 9757 / MK), this protein is Multifunctional CCA protein.